Here is a 527-residue protein sequence, read N- to C-terminus: Probable feruloyl esterase B (527 aa).

An N-terminal signal peptide occupies residues 1-19; it reads MALLRHLLPVLTVGSAVQS. Disulfide bonds link Cys31/Cys76 and Cys65/Cys115. Asn56, Asn86, and Asn139 each carry an N-linked (GlcNAc...) asparagine glycan. 4 cysteine pairs are disulfide-bonded: Cys188–Cys442, Cys257–Cys274, Cys283–Cys292, and Cys504–Cys526. The active-site Acyl-ester intermediate is the Ser189. 5 residues coordinate Ca(2+): Asp258, Asp261, Ala263, Asp265, and Ile267. An N-linked (GlcNAc...) asparagine glycan is attached at Asn277. N-linked (GlcNAc...) asparagine glycosylation is found at Asn312 and Asn356. Active-site charge relay system residues include Asp401 and His441.

Belongs to the tannase family.

It is found in the secreted. It catalyses the reaction feruloyl-polysaccharide + H2O = ferulate + polysaccharide.. In terms of biological role, involved in degradation of plant cell walls. Hydrolyzes the feruloyl-arabinose ester bond in arabinoxylans as well as the feruloyl-galactose and feruloyl-arabinose ester bonds in pectin. The polypeptide is Probable feruloyl esterase B (faeB) (Emericella nidulans (strain FGSC A4 / ATCC 38163 / CBS 112.46 / NRRL 194 / M139) (Aspergillus nidulans)).